The following is a 130-amino-acid chain: Small ribosomal subunit protein uS9 (130 aa).

The disordered stretch occupies residues 109-130 (RVKERKKYGQKGARAKFQFSKR).

This sequence belongs to the universal ribosomal protein uS9 family.

This is Small ribosomal subunit protein uS9 from Desulfotalea psychrophila (strain LSv54 / DSM 12343).